Consider the following 289-residue polypeptide: ATP synthase subunit a (289 aa).

7 helical membrane-spanning segments follow: residues 41–61, 101–121, 129–149, 166–186, 189–209, 222–242, and 244–264; these read KATA…WLGF, YLLV…IPAA, IAVP…AGIK, TAPL…TLIV, FTLA…LLVF, FVFG…ELVI, and ALQA…AMAH.

It belongs to the ATPase A chain family. In terms of assembly, F-type ATPases have 2 components, CF(1) - the catalytic core - and CF(0) - the membrane proton channel. CF(1) has five subunits: alpha(3), beta(3), gamma(1), delta(1), epsilon(1). CF(0) has three main subunits: a(1), b(2) and c(9-12). The alpha and beta chains form an alternating ring which encloses part of the gamma chain. CF(1) is attached to CF(0) by a central stalk formed by the gamma and epsilon chains, while a peripheral stalk is formed by the delta and b chains.

The protein localises to the cell membrane. Its function is as follows. Key component of the proton channel; it plays a direct role in the translocation of protons across the membrane. The sequence is that of ATP synthase subunit a from Frankia alni (strain DSM 45986 / CECT 9034 / ACN14a).